The following is a 434-amino-acid chain: Nicotinate phosphoribosyltransferase (434 aa).

His-242 bears the Phosphohistidine; by autocatalysis mark.

Belongs to the NAPRTase family. Transiently phosphorylated on a His residue during the reaction cycle. Phosphorylation strongly increases the affinity for substrates and increases the rate of nicotinate D-ribonucleotide production. Dephosphorylation regenerates the low-affinity form of the enzyme, leading to product release.

The catalysed reaction is nicotinate + 5-phospho-alpha-D-ribose 1-diphosphate + ATP + H2O = nicotinate beta-D-ribonucleotide + ADP + phosphate + diphosphate. Its pathway is cofactor biosynthesis; NAD(+) biosynthesis; nicotinate D-ribonucleotide from nicotinate: step 1/1. Its function is as follows. Catalyzes the synthesis of beta-nicotinate D-ribonucleotide from nicotinate and 5-phospho-D-ribose 1-phosphate at the expense of ATP. This is Nicotinate phosphoribosyltransferase from Rhizobium etli (strain CIAT 652).